The sequence spans 427 residues: Enolase (427 aa).

Gln-163 contributes to the (2R)-2-phosphoglycerate binding site. Glu-205 functions as the Proton donor in the catalytic mechanism. Mg(2+) contacts are provided by Asp-242, Glu-285, and Asp-312. Residues Lys-337, Arg-366, Ser-367, and Lys-388 each coordinate (2R)-2-phosphoglycerate. Lys-337 acts as the Proton acceptor in catalysis.

This sequence belongs to the enolase family. Mg(2+) serves as cofactor.

The protein localises to the cytoplasm. Its subcellular location is the secreted. It is found in the cell surface. The catalysed reaction is (2R)-2-phosphoglycerate = phosphoenolpyruvate + H2O. It participates in carbohydrate degradation; glycolysis; pyruvate from D-glyceraldehyde 3-phosphate: step 4/5. Catalyzes the reversible conversion of 2-phosphoglycerate (2-PG) into phosphoenolpyruvate (PEP). It is essential for the degradation of carbohydrates via glycolysis. This Rhodopseudomonas palustris (strain ATCC BAA-98 / CGA009) protein is Enolase.